A 216-amino-acid polypeptide reads, in one-letter code: Cytosolic-abundant heat soluble protein 2 (216 aa).

Residues 1–11 are compositionally biased toward polar residues; that stretch reads MSRDQGSTEYD. 2 disordered regions span residues 1-34 and 66-91; these read MSRD…DVRT and RISG…KDRE. Residues 12-22 are compositionally biased toward basic and acidic residues; it reads ANQRQEQHQEQ. 2 stretches are compositionally biased toward polar residues: residues 25–34 and 68–77; these read TSYTHTDVRT and SGQSSETHVQ. Residues 81 to 180 adopt a coiled-coil conformation; that stretch reads EMEAEARKDR…ARLATQALDQ (100 aa). CAHS motif stretches follow at residues 115–133 and 152–170; these read YRKQ…LEKQ and QKRQ…LDRE.

It belongs to the Cytosolic-abundant heat soluble protein (CAHS) family.

The protein resides in the cytoplasm. In terms of biological role, CAHS proteins are cytosolic heat soluble proteins that seem to contribute to the anhydrobiosis in tardigrades, but their specific mechanisms are yet to be identified. It is possible that protection during anhydrobiosis might occur via the stabilization of vitrifying small molecules such as sugars, but not via the direct glass transition of CAHS proteins themselves. The protein is Cytosolic-abundant heat soluble protein 2 of Ramazzottius varieornatus (Water bear).